We begin with the raw amino-acid sequence, 312 residues long: Protein YIPF2 (312 aa).

An N-acetylalanine modification is found at Ala-2. The Cytoplasmic portion of the chain corresponds to 2-121; that stretch reads AAADELAFHE…LRNRPDLYGP (120 aa). Residues 122–142 form a helical membrane-spanning segment; it reads FWICATLAFVLAVTGNLTLVL. The Lumenal portion of the chain corresponds to 143–160; the sequence is AQRRDPSIHYSPQFHKVT. The helical transmembrane segment at 161 to 181 threads the bilayer; sequence IAGITIYCYAWLVPLALWGFL. Residues 182 to 193 lie on the Cytoplasmic side of the membrane; the sequence is RWRQGTRERMGL. The chain crosses the membrane as a helical span at residues 194–216; sequence YTFLETVCVYGYSLFVFIPTVVL. The Lumenal segment spans residues 217–228; it reads WLIPVQWIQWLF. The helical transmembrane segment at 229 to 249 threads the bilayer; sequence GALGLALSAAGLVFTLWPVVR. At 250 to 253 the chain is on the cytoplasmic side; it reads EDTR. The chain crosses the membrane as a helical span at residues 254 to 274; it reads LVAAALLSTVVLLHALLALGC. Residues 275–312 are Lumenal-facing; it reads KLYFFQPLPLDHVVPAPQATPPSPNVLLPSSIQPMTTS.

The protein belongs to the YIP1 family. In terms of assembly, interacts with YIPF6; this interaction may stabilize YIPF2. May also form a ternary complex with YIPF1 and YIPF6.

It localises to the golgi apparatus. The protein localises to the cis-Golgi network membrane. Its subcellular location is the trans-Golgi network membrane. It is found in the late endosome membrane. This Mus musculus (Mouse) protein is Protein YIPF2 (Yipf2).